The following is a 296-amino-acid chain: Nucleotide-binding protein SAG0531 (296 aa).

13-20 (GMSGAGKT) lines the ATP pocket. 63-66 (DMRS) provides a ligand contact to GTP.

It belongs to the RapZ-like family.

Displays ATPase and GTPase activities. The sequence is that of Nucleotide-binding protein SAG0531 from Streptococcus agalactiae serotype V (strain ATCC BAA-611 / 2603 V/R).